Here is a 952-residue protein sequence, read N- to C-terminus: Ubiquitin carboxyl-terminal hydrolase 15 (952 aa).

Alanine 2 bears the N-acetylalanine mark. The segment at 2–223 (AEGGAADLDT…KNEDGTWPRG (222 aa)) is mediates interaction with SART3. The region spanning 7–118 (ADLDTQRSDI…GQEPIARKVV (112 aa)) is the DUSP domain. Residues 260–904 (CGLSNLGNTC…AAYVLFYQRQ (645 aa)) enclose the USP domain. Catalysis depends on cysteine 269, which acts as the Nucleophile. A Phosphothreonine modification is found at threonine 573. The segment at 597–665 (ETDGPLRCCE…GGDNDSENGL (69 aa)) is disordered. Acidic residues predominate over residues 627–644 (METDEPDDESSQDQELPS). The active-site Proton acceptor is the histidine 862. The disordered stretch occupies residues 923-952 (SAATGVPLESDEDSNDNDNDLENENCMHTN). Residues 931–945 (ESDEDSNDNDNDLEN) show a composition bias toward acidic residues. Phosphoserine is present on residues serine 932 and serine 936.

It belongs to the peptidase C19 family. A homodimer structure has been reported; however it is unclear whether the protein form a homodimer in vivo. Identified in a complex with the COP9 signalosome complex (CSN). Interacts with SMAD1, SMAD2 and SMAD3; the interaction is direct. Forms a complex with SMURF2 and SMAD7. Interacts with TGFBR1. Interacts with SART3; the interaction is direct. May interact with RNF20 and RNF40. May interact with PRKN. Interacts with INCA1. Post-translationally, phosphorylated. Phosphorylation protects against ubiquitination and subsequent degradation by the proteasome. In terms of processing, ubiquitinated, leading to degradation by the proteasome. In terms of tissue distribution, highly expressed in testis and spleen, and at lower level in other tissues.

The protein localises to the cytoplasm. Its subcellular location is the nucleus. It localises to the mitochondrion. The catalysed reaction is Thiol-dependent hydrolysis of ester, thioester, amide, peptide and isopeptide bonds formed by the C-terminal Gly of ubiquitin (a 76-residue protein attached to proteins as an intracellular targeting signal).. Hydrolase that removes conjugated ubiquitin from target proteins and regulates various pathways such as the TGF-beta receptor signaling, NF-kappa-B and RNF41/NRDP1-PRKN pathways. Acts as a key regulator of TGF-beta receptor signaling pathway, but the precise mechanism is still unclear: according to a report, acts by promoting deubiquitination of monoubiquitinated R-SMADs (SMAD1, SMAD2 and/or SMAD3), thereby alleviating inhibition of R-SMADs and promoting activation of TGF-beta target genes. According to another reports, regulates the TGF-beta receptor signaling pathway by mediating deubiquitination and stabilization of TGFBR1, leading to an enhanced TGF-beta signal. Able to mediate deubiquitination of monoubiquitinated substrates, 'Lys-27'-, 'Lys-48'- and 'Lys-63'-linked polyubiquitin chains. May also regulate gene expression and/or DNA repair through the deubiquitination of histone H2B. Acts as an inhibitor of mitophagy by counteracting the action of parkin (PRKN): hydrolyzes cleavage of 'Lys-48'- and 'Lys-63'-linked polyubiquitin chains attached by parkin on target proteins such as MFN2, thereby reducing parkin's ability to drive mitophagy. Acts as an associated component of COP9 signalosome complex (CSN) and regulates different pathways via this association: regulates NF-kappa-B by mediating deubiquitination of NFKBIA and deubiquitinates substrates bound to VCP. Involved in endosome organization by mediating deubiquitination of SQSTM1: ubiquitinated SQSTM1 forms a molecular bridge that restrains cognate vesicles in the perinuclear region and its deubiquitination releases target vesicles for fast transport into the cell periphery. Acts as a negative regulator of antifungal immunity by mediating 'Lys-27'-linked deubiquitination of CARD9, thereby inactivating CARD9. The protein is Ubiquitin carboxyl-terminal hydrolase 15 (Usp15) of Rattus norvegicus (Rat).